We begin with the raw amino-acid sequence, 624 residues long: ADP,ATP carrier protein 1, chloroplastic (624 aa).

The N-terminal 79 residues, 1–79 (MEAVIQTRGL…KERSTEFICK (79 aa)), are a transit peptide targeting the chloroplast. Ala-80 carries the N-acetylalanine modification. The next 6 membrane-spanning stretches (helical) occupy residues 108 to 128 (VEVA…CILF), 182 to 202 (ALFY…GFVM), 240 to 260 (LFYV…FWGF), 315 to 335 (AMMS…WWVN), 446 to 466 (LLTG…APLV), and 545 to 565 (LANS…AWLA). The disordered stretch occupies residues 579-624 (SEEELEKEMERASSVKIPVVSQDESGNGSLGESPSSSPEKSAPTNL). A compositionally biased stretch (low complexity) spans 602–624 (ESGNGSLGESPSSSPEKSAPTNL).

This sequence belongs to the ADP/ATP translocase tlc (TC 2.A.12.2) family.

The protein localises to the plastid. The protein resides in the chloroplast membrane. In terms of biological role, may function as an ATP importer. This Arabidopsis thaliana (Mouse-ear cress) protein is ADP,ATP carrier protein 1, chloroplastic (AATP1).